A 208-amino-acid polypeptide reads, in one-letter code: Translation initiation factor IF-3 (208 aa).

Belongs to the IF-3 family. Monomer.

The protein localises to the cytoplasm. Its function is as follows. IF-3 binds to the 30S ribosomal subunit and shifts the equilibrium between 70S ribosomes and their 50S and 30S subunits in favor of the free subunits, thus enhancing the availability of 30S subunits on which protein synthesis initiation begins. The chain is Translation initiation factor IF-3 from Parabacteroides distasonis (strain ATCC 8503 / DSM 20701 / CIP 104284 / JCM 5825 / NCTC 11152).